The sequence spans 249 residues: MASRRMETKPVITCLKTLLIIYSFVFWITGVILLAVGVWGKLTLGTYISLIAENSTNAPYVLIGTGTTIVVFGLFGCFATCRGSPWMLKLYAMFLSLVFLAELVAGISGFVFRHEIKDTFLRTYTDAMQNYNGNDERSRAVDHVQRSLSCCGVQNYTNWSSSPYFLDHGIPPSCCMNETDCNPLDLHNLTVAATKVNQKGCYDLVTSFMETNMGIIAGVAFGIAFSQLIGMLLACCLSRFITANQYEMV.

The Cytoplasmic segment spans residues 1 to 16; the sequence is MASRRMETKPVITCLK. A helical transmembrane segment spans residues 17–40; sequence TLLIIYSFVFWITGVILLAVGVWG. At 41–56 the chain is on the extracellular side; it reads KLTLGTYISLIAENST. An N-linked (GlcNAc...) asparagine glycan is attached at Asn54. The chain crosses the membrane as a helical span at residues 57–75; it reads NAPYVLIGTGTTIVVFGLF. Over 76–86 the chain is Cytoplasmic; it reads GCFATCRGSPW. The helical transmembrane segment at 87 to 112 threads the bilayer; it reads MLKLYAMFLSLVFLAELVAGISGFVF. Over 113–213 the chain is Extracellular; the sequence is RHEIKDTFLR…LVTSFMETNM (101 aa). N-linked (GlcNAc...) asparagine glycosylation is found at Asn155, Asn158, Asn177, and Asn188. The helical transmembrane segment at 214–234 threads the bilayer; it reads GIIAGVAFGIAFSQLIGMLLA. Over 235-249 the chain is Cytoplasmic; it reads CCLSRFITANQYEMV.

It belongs to the tetraspanin (TM4SF) family.

The protein resides in the membrane. In terms of biological role, may be involved in cell proliferation and cell motility. The sequence is that of Tetraspanin-7 (Tspan7) from Mus musculus (Mouse).